The primary structure comprises 394 residues: RILP-like protein 1 (394 aa).

In terms of domain architecture, RH1 spans 2 to 89 (EGISALEKNV…RLERMDRIEK (88 aa)). Residues 68-327 (EMEELRLELD…EAEEENKLPQ (260 aa)) are a coiled coil. The RH2 domain maps to 282–347 (RPRFTLQELR…IPQESGIKRL (66 aa)).

It belongs to the RILPL family.

It is found in the cytoplasm. Its subcellular location is the cytosol. It localises to the cytoskeleton. The protein resides in the microtubule organizing center. The protein localises to the centrosome. It is found in the cell projection. Its subcellular location is the cilium. In terms of biological role, plays a role in the regulation of cell shape and polarity. Plays a role in cellular protein transport, including protein transport away from primary cilia. Neuroprotective protein. This is RILP-like protein 1 (rilpl1) from Xenopus laevis (African clawed frog).